The sequence spans 304 residues: MSVAPIDFQQVEKRYDDKLVVDGLSFHVQPGECFGLLGPNGAGKTTTLKMLLGITHPDAGSISLCGEPVPSRARHARQRVGVVPQFDNLDPDFTVRENLLVFARYFGLTAHAARALVPPLLEFAKLESKADAKVGELSGGMKRRLTLARALVNDPDVLVLDEPTTGLDPQARHLMWERLRSLLARGKTILLTTHFMEEAERLCHRLCVIEEGRKIAEGAPRMLIEAEIGCDVIEIYGPDPVQLRDELAPFAERTEISGETLFCYVDNPEPIHARLKGRAGLRYLHRPANLEDVFLRLTGREMLD.

The ABC transporter domain maps to Ile-6 to Tyr-236. Residue Gly-38 to Thr-45 participates in ATP binding.

This sequence belongs to the ABC transporter superfamily. Lipooligosaccharide exporter (TC 3.A.1.102) family. The complex is composed of two ATP-binding proteins (NodI) and two transmembrane proteins (NodJ).

The protein localises to the cell inner membrane. In terms of biological role, part of the ABC transporter complex NodIJ involved in the export of the nodulation factors (Nod factors), the bacterial signal molecules that induce symbiosis and subsequent nodulation induction. Nod factors are LCO (lipo-chitin oligosaccharide), a modified beta-1,4-linked N-acetylglucosamine oligosaccharide. This subunit is responsible for energy coupling to the transport system. The polypeptide is Nod factor export ATP-binding protein I (Burkholderia pseudomallei (strain 1710b)).